Consider the following 180-residue polypeptide: NADH-quinone oxidoreductase subunit I (180 aa).

2 consecutive 4Fe-4S ferredoxin-type domains span residues 50 to 80 and 90 to 119; these read LTRN…LQKS and KFFR…LMPD. The [4Fe-4S] cluster site is built by Cys60, Cys63, Cys66, Cys70, Cys99, Cys102, Cys105, and Cys109.

Belongs to the complex I 23 kDa subunit family. As to quaternary structure, NDH-1 is composed of 13 different subunits. Subunits NuoA, H, J, K, L, M, N constitute the membrane sector of the complex. [4Fe-4S] cluster is required as a cofactor.

Its subcellular location is the cell membrane. It catalyses the reaction a quinone + NADH + 5 H(+)(in) = a quinol + NAD(+) + 4 H(+)(out). Its function is as follows. NDH-1 shuttles electrons from NADH, via FMN and iron-sulfur (Fe-S) centers, to quinones in the respiratory chain. The immediate electron acceptor for the enzyme in this species is believed to be ubiquinone. Couples the redox reaction to proton translocation (for every two electrons transferred, four hydrogen ions are translocated across the cytoplasmic membrane), and thus conserves the redox energy in a proton gradient. The chain is NADH-quinone oxidoreductase subunit I from Buchnera aphidicola subsp. Acyrthosiphon pisum (strain APS) (Acyrthosiphon pisum symbiotic bacterium).